The sequence spans 217 residues: 3,4-dihydroxy-2-butanone 4-phosphate synthase (217 aa).

Residues 37-38, Asp-42, 150-154, and Glu-174 contribute to the D-ribulose 5-phosphate site; these read RE and RQGHT. Glu-38 lines the Mg(2+) pocket. His-153 lines the Mg(2+) pocket.

The protein belongs to the DHBP synthase family. In terms of assembly, homodimer. Mg(2+) is required as a cofactor. Requires Mn(2+) as cofactor.

It catalyses the reaction D-ribulose 5-phosphate = (2S)-2-hydroxy-3-oxobutyl phosphate + formate + H(+). It participates in cofactor biosynthesis; riboflavin biosynthesis; 2-hydroxy-3-oxobutyl phosphate from D-ribulose 5-phosphate: step 1/1. In terms of biological role, catalyzes the conversion of D-ribulose 5-phosphate to formate and 3,4-dihydroxy-2-butanone 4-phosphate. This Photorhabdus laumondii subsp. laumondii (strain DSM 15139 / CIP 105565 / TT01) (Photorhabdus luminescens subsp. laumondii) protein is 3,4-dihydroxy-2-butanone 4-phosphate synthase.